We begin with the raw amino-acid sequence, 383 residues long: Adaptive-response sensory kinase SasA (383 aa).

One can recognise a Histidine kinase domain in the interval 161 to 383 (MLAHDLRSPL…SFHFTLPVYR (223 aa)). His-164 carries the phosphohistidine; by autocatalysis modification.

Homooligomerizes. Interacts with KaiC1. Interacts with KaiC1 and RpaA. Binds to the B-loop in the CI domain of KaiC; SasA and KaiB compete to bind to the CI domain.

It catalyses the reaction ATP + protein L-histidine = ADP + protein N-phospho-L-histidine.. Its function is as follows. Member of the two-component regulatory system SasA/RpaA involved in genome-wide circadian gene expression. One of several clock output pathways. Participates in the Kai clock protein complex, the main circadian regulator in cyanobacteria, via its interaction with KaiC. KaiC enhances the autophosphorylation activity of SasA, which then transfers its phosphate group to RpaA to activate it. In addition to its output function, recruits fold-shifted KaiB (KaiB(fs)) to KaiC to cooperatively form the KaiB(6):KaiC(6) complex (independent of SasA kinase activity). Required for robustness of the circadian rhythm of gene expression and is involved in clock output, also required for adaptation to light/dark cycles. In terms of biological role, plays an important role in glucose metabolism, important for expression of genes involved in glycolysis, gluconeogenesis, the oxidative pentose phosphate pathway, and glycogen metabolism. Required for heterotrophic growth. Overexpression from the psbAII promoter leads to altered levels of genes involved in carbon metabolism, increased levels of transcripts for clock oscillator genes in the light and the dark, complete loss of glycogen accumulation, decreased levels of metabolites of sugar catabolism and increased levels of amino acids in the light and increased levels of SigE protein. The sequence is that of Adaptive-response sensory kinase SasA from Synechocystis sp. (strain ATCC 27184 / PCC 6803 / Kazusa).